A 471-amino-acid polypeptide reads, in one-letter code: 3-isopropylmalate dehydratase large subunit (471 aa).

[4Fe-4S] cluster is bound by residues C349, C409, and C412.

Belongs to the aconitase/IPM isomerase family. LeuC type 1 subfamily. As to quaternary structure, heterodimer of LeuC and LeuD. [4Fe-4S] cluster serves as cofactor.

It carries out the reaction (2R,3S)-3-isopropylmalate = (2S)-2-isopropylmalate. The protein operates within amino-acid biosynthesis; L-leucine biosynthesis; L-leucine from 3-methyl-2-oxobutanoate: step 2/4. Functionally, catalyzes the isomerization between 2-isopropylmalate and 3-isopropylmalate, via the formation of 2-isopropylmaleate. The sequence is that of 3-isopropylmalate dehydratase large subunit from Aliivibrio fischeri (strain ATCC 700601 / ES114) (Vibrio fischeri).